A 142-amino-acid chain; its full sequence is MPKKVVGKVKLQLPAGKATPAPPVGPALGQYGVNIMEFCKAYNAATAGQEGMIIPVEITIYEDRSFTFVTKTPPASDLLKKAAGVEKGSGEPNKVKVGKVKRSKIREIAELKMKDLNANDIEAAMRMIEGTARSMGIEIIEG.

Belongs to the universal ribosomal protein uL11 family. Part of the ribosomal stalk of the 50S ribosomal subunit. Interacts with L10 and the large rRNA to form the base of the stalk. L10 forms an elongated spine to which L12 dimers bind in a sequential fashion forming a multimeric L10(L12)X complex. Post-translationally, one or more lysine residues are methylated.

Its function is as follows. Forms part of the ribosomal stalk which helps the ribosome interact with GTP-bound translation factors. The polypeptide is Large ribosomal subunit protein uL11 (Dictyoglomus turgidum (strain DSM 6724 / Z-1310)).